A 505-amino-acid polypeptide reads, in one-letter code: MGCWGRNRGRLLCMLALTFMFMVLEVVVSRVTSSLAMLSDSFHMLSDVLALVVALVAERFARRTHATQKNTFGWIRAEVMGALVNAIFLTGLCFAILLEAIERFVEPHEMQQPLVVLGVGVAGLLVNVLGLCLFHHHSGFSQDSGHSHSHGSHGHGLPKGPRVKSSRPGSNDINVAPGEQGPDQEETNTLVANTSNSNGLKLDPADPEKPRSGDTVEVQVNGNLIREPDHVELEEDRAGQLNMRGVFLHVLGDALGSVIVVVNALVFYFSWKGCSEGDFCVNPCFPDPCKAFVEIINSTHASVYEAGPCWVLYLDPTLCVVMVCILLYTTYPLLKESALILLQTVPKQIDIRNLIKELRNVEGVEEVHELHVWQLAGSRIIATAHIKCEDPTSYMEVAKTIKDVFHNHGIHATTIQPEFASVGSKSSVVPCELACRTQCALKQCCGTLPQAHSGKDAEKTPTVSISCLELSNNLEKKPRRTKAENIPAVVIEIKNMPNKQPESSL.

Residues 1–10 lie on the Cytoplasmic side of the membrane; it reads MGCWGRNRGR. The chain crosses the membrane as a helical span at residues 11-31; it reads LLCMLALTFMFMVLEVVVSRV. Topologically, residues 32 to 35 are extracellular; it reads TSSL. Residues 36 to 56 form a helical membrane-spanning segment; it reads AMLSDSFHMLSDVLALVVALV. The Zn(2+) site is built by His-43 and Asp-47. Topologically, residues 57-80 are cytoplasmic; sequence AERFARRTHATQKNTFGWIRAEVM. A helical transmembrane segment spans residues 81–101; it reads GALVNAIFLTGLCFAILLEAI. Residues 102–113 lie on the Extracellular side of the membrane; it reads ERFVEPHEMQQP. Residues 114–134 form a helical membrane-spanning segment; that stretch reads LVVLGVGVAGLLVNVLGLCLF. At 135–246 the chain is on the cytoplasmic side; sequence HHHSGFSQDS…RAGQLNMRGV (112 aa). The segment at 142–215 is disordered; sequence QDSGHSHSHG…DPEKPRSGDT (74 aa). The span at 187 to 199 shows a compositional bias: polar residues; the sequence is TNTLVANTSNSNG. The span at 203–214 shows a compositional bias: basic and acidic residues; the sequence is DPADPEKPRSGD. The chain crosses the membrane as a helical span at residues 247 to 267; sequence FLHVLGDALGSVIVVVNALVF. Residues His-249 and Asp-253 each coordinate Zn(2+). The Extracellular segment spans residues 268–306; sequence YFSWKGCSEGDFCVNPCFPDPCKAFVEIINSTHASVYEA. Residue Asn-297 is glycosylated (N-linked (GlcNAc...) asparagine). A helical transmembrane segment spans residues 307–327; it reads GPCWVLYLDPTLCVVMVCILL. The Cytoplasmic segment spans residues 328–505; sequence YTTYPLLKES…MPNKQPESSL (178 aa). Ser-504 carries the phosphoserine modification.

This sequence belongs to the cation diffusion facilitator (CDF) transporter (TC 2.A.4) family. SLC30A subfamily. In terms of assembly, homodimer. Interacts with TMEM163. Interacts and forms a complex with TMC6 and TMC8; the interaction regulates zinc transport into the ER.

It is found in the cell membrane. It localises to the basolateral cell membrane. Its subcellular location is the cytoplasmic vesicle membrane. The protein resides in the cytoplasm. The protein localises to the endoplasmic reticulum membrane. It is found in the golgi apparatus membrane. It localises to the nucleus membrane. It catalyses the reaction Zn(2+)(in) + 2 H(+)(out) = Zn(2+)(out) + 2 H(+)(in). Its function is as follows. Zinc ion:proton antiporter that could function at the plasma membrane mediating zinc efflux from cells against its electrochemical gradient protecting them from intracellular zinc accumulation and toxicity. Alternatively, could prevent the transport to the plasma membrane of CACNB2, the L-type calcium channels regulatory subunit, through a yet to be defined mechanism. By modulating the expression of these channels at the plasma membrane, could prevent calcium and zinc influx into cells. By the same mechanism, could also prevent L-type calcium channels-mediated heavy metal influx into cells. In some cells, could also function as a zinc ion:proton antiporter mediating zinc entry into the lumen of cytoplasmic vesicles. In macrophages, can increase zinc ions concentration into the lumen of cytoplasmic vesicles containing engulfed bacteria and could help inactivate them. Forms a complex with TMC6/EVER1 and TMC8/EVER2 at the ER membrane of keratynocytes which facilitates zinc uptake into the ER. Down-regulates the activity of transcription factors induced by zinc and cytokines. The protein is Proton-coupled zinc antiporter SLC30A1 of Macaca fascicularis (Crab-eating macaque).